The sequence spans 41 residues: U-theraphotoxin-Lk1a (41 aa).

3 cysteine pairs are disulfide-bonded: Cys1-Cys16, Cys8-Cys21, and Cys15-Cys36.

Belongs to the neurotoxin 14 (magi-1) family. 08 (Ltx-4) subfamily. Expressed by the venom gland.

The protein resides in the secreted. Functionally, toxin that causes irreversible contractile paralysis in adult Aedes aegypti resulting in 100% mortality after 24 hours. This is U-theraphotoxin-Lk1a from Lasiodora klugi (Bahia scarlet tarantula).